An 860-amino-acid chain; its full sequence is MLGQLVGGLIGGHHDSKKVKGTVVMMKKNALDFTDLAGSLTDKIFEALGQKVSFQLISSVQSDPANGLQGKHSNPAYLENFLLTLTPLAAGETAFGVTFDWNEEFGVPGAFVIKNMHINEFFLKSLTLEDVPNHGKVHFVCNSWVYPSFRYKSDRIFFANQPYLPSETPELLRKYRENELVTLRGDGTGKREAWDRIYDYDVYNDLGNPDQGKENVRTTLGGSADYPYPRRGRTGRPPTRTDPKSESRIPLILSLDIYVPRDERFGHLKMSDFLTYALKSIVQFILPELHALFDGTPNEFDSFEDVLRLYEGGIKLPQGPLFKALTDAIPLEMIRELLRTDGEGILRFPTPLVIKDSKTAWRTDEEFAREMLAGVNPVIISRLEEFPPKSKLDPELYGNQNSTITAEHIEGKLDGLTIDEAINSNKLFILNHHDVLIPYLRRINTTTTKTYASRTLLFLQDNGSLKPLAIELSLPHPDGDQFGVTSKVYTPSDQGVEGSIWQLAKAYVAVNDSGVHQLISHWLNTHAVIEPFVIATNRQLSVLHPIHKLLYPHFRDTMNINALARQILINAGGVLESTVFPSKFAMEMSAVVYKDWVFPDQALPADLVKRGVAVEDSSSPHGVRLLIDDYPYAVDGLEIWSAIKSWVTDYCSFYYGSNEEILKDNELQAWWKEVREVGHGDKKNEPWWAEMETPQELIDSCTTIIWIASALHAAVNFGQYPYAGYLPNRPTVSRKFMPEPGTPEYEELKKNPDKAFLKTITAQLQTLLGVSLIEILSRHTTDEIYLGQRESPEWTKDKEPLAAFERFGNKLTDIEKQIMQRNGNNILTNRTGPVNAPYTLLFPTSEGGLTGKGIPNSVSI.

In terms of domain architecture, PLAT spans 29–159 (NALDFTDLAG…RYKSDRIFFA (131 aa)). Residues 162-860 (PYLPSETPEL…GKGIPNSVSI (699 aa)) form the Lipoxygenase domain. A disordered region spans residues 209–246 (PDQGKENVRTTLGGSADYPYPRRGRTGRPPTRTDPKSE). Histidine 521, histidine 526, histidine 712, asparagine 716, and isoleucine 860 together coordinate Fe cation.

This sequence belongs to the lipoxygenase family. In terms of assembly, monomer. Fe cation is required as a cofactor. As to expression, expressed in germinating seeds as well as in ripening fruit.

The protein localises to the cytoplasm. It catalyses the reaction (9Z,12Z)-octadecadienoate + O2 = (9S)-hydroperoxy-(10E,12Z)-octadecadienoate. It functions in the pathway lipid metabolism; oxylipin biosynthesis. Functionally, plant lipoxygenase may be involved in a number of diverse aspects of plant physiology including growth and development, pest resistance, and senescence or responses to wounding. It catalyzes the hydroperoxidation of lipids containing a cis,cis-1,4-pentadiene structure. This Solanum lycopersicum (Tomato) protein is Linoleate 9S-lipoxygenase A (LOX1.1).